The primary structure comprises 79 residues: Small integral membrane protein 40 (79 aa).

Residues 35–55 (FFIFLALFLTLLMLEAAYKLL) form a helical membrane-spanning segment.

It localises to the membrane. The polypeptide is Small integral membrane protein 40 (Homo sapiens (Human)).